The chain runs to 31 residues: Cytochrome b6-f complex subunit 6 (31 aa).

A helical membrane pass occupies residues 3 to 23 (TLTSYFGFLLVALTITLVLFI).

The protein belongs to the PetL family. The 4 large subunits of the cytochrome b6-f complex are cytochrome b6, subunit IV (17 kDa polypeptide, PetD), cytochrome f and the Rieske protein, while the 4 small subunits are PetG, PetL, PetM and PetN. The complex functions as a dimer.

It is found in the plastid. The protein localises to the chloroplast thylakoid membrane. Functionally, component of the cytochrome b6-f complex, which mediates electron transfer between photosystem II (PSII) and photosystem I (PSI), cyclic electron flow around PSI, and state transitions. PetL is important for photoautotrophic growth as well as for electron transfer efficiency and stability of the cytochrome b6-f complex. The polypeptide is Cytochrome b6-f complex subunit 6 (Populus alba (White poplar)).